The chain runs to 230 residues: Acyl-protein thioesterase 1 (230 aa).

Residues S119, D174, and H208 each act as charge relay system in the active site. N6-acetyllysine is present on K224.

This sequence belongs to the AB hydrolase superfamily. AB hydrolase 2 family. In terms of assembly, homodimer.

It is found in the cytoplasm. It localises to the cell membrane. The protein resides in the nucleus membrane. Its subcellular location is the endoplasmic reticulum. The enzyme catalyses S-hexadecanoyl-L-cysteinyl-[protein] + H2O = L-cysteinyl-[protein] + hexadecanoate + H(+). It carries out the reaction 1-hexadecanoyl-sn-glycero-3-phosphocholine + H2O = sn-glycerol 3-phosphocholine + hexadecanoate + H(+). The catalysed reaction is a 1-(9Z-octadecenoyl)-2-acyl-sn-glycero-3-phosphocholine + H2O = a 2-acyl-sn-glycero-3-phosphocholine + (9Z)-octadecenoate + H(+). Acts as an acyl-protein thioesterase. Hydrolyzes fatty acids from S-acylated cysteine residues in proteins such as trimeric G alpha proteins or HRAS. Acts as a palmitoyl thioesterase that catalyzes depalmitoylation of proteins, such as ADRB2, KCNMA1 and SQSTM1. Acts as a negative regulator of autophagy by mediating palmitoylation of SQSTM1, decreasing affinity between SQSTM1 and ATG8 proteins and recruitment of ubiquitinated cargo proteins to autophagosomes. Acts as a lysophospholipase and hydrolyzes lysophosphatidylcholine (lyso-PC). Also hydrolyzes lysophosphatidylethanolamine (lyso-PE), lysophosphatidylinositol (lyso-PI) and lysophosphatidylserine (lyso-PS). Has much higher thioesterase activity than lysophospholipase activity. Contributes to the production of lysophosphatidic acid (LPA) during blood coagulation by recognizing and cleaving plasma phospholipids to generate lysophospholipids which in turn act as substrates for ENPP2 to produce LPA. The chain is Acyl-protein thioesterase 1 (Lypla1) from Mus musculus (Mouse).